The following is a 150-amino-acid chain: Protein-export protein SecB (150 aa).

The protein belongs to the SecB family. As to quaternary structure, homotetramer, a dimer of dimers. One homotetramer interacts with 1 SecA dimer.

The protein localises to the cytoplasm. One of the proteins required for the normal export of preproteins out of the cell cytoplasm. It is a molecular chaperone that binds to a subset of precursor proteins, maintaining them in a translocation-competent state. It also specifically binds to its receptor SecA. The sequence is that of Protein-export protein SecB from Chromobacterium violaceum (strain ATCC 12472 / DSM 30191 / JCM 1249 / CCUG 213 / NBRC 12614 / NCIMB 9131 / NCTC 9757 / MK).